The primary structure comprises 76 residues: Sulfur carrier protein TusA (76 aa).

The active-site Cysteine persulfide intermediate is the C15.

It belongs to the sulfur carrier protein TusA family. In terms of assembly, mostly a monomer, a small portion forms homodimer via intermolecular disulfide bonds. Tightly interacts with DsrEFH.

The protein localises to the cytoplasm. It functions in the pathway energy metabolism; sulfur metabolism. Sulfur carrier protein involved in sulfur trafficking for oxidative dissimilatory sulfur metabolism. Component of a sulfur relay system that starts with the sulfur-mobilizing rhodanese-like protein Rhd_2599 (Alvin_2599), which transfers the sulfur from a low-molecular-weight thiol, maybe glutathione, to the TusA protein (Alvin_2600); TusA serves as the sulfur donor for DsrEFH, which persulfurates DsrC; persulfurated DsrC very probably serves as a direct substrate for reverse-acting sulfite reductase, DsrAB. TusA seems to be not exclusively dedicated to sulfur oxidation and may have other important roles in the cell. Might also act as a sulfur mediator required for 2-thiouridine formation of tRNA. This Allochromatium vinosum (strain ATCC 17899 / DSM 180 / NBRC 103801 / NCIMB 10441 / D) (Chromatium vinosum) protein is Sulfur carrier protein TusA.